Here is a 336-residue protein sequence, read N- to C-terminus: Dihydroorotate dehydrogenase (quinone) (336 aa).

FMN is bound by residues 62-66 (AGLDK) and Thr-86. Position 66 (Lys-66) interacts with substrate. 111–115 (NRMGF) contributes to the substrate binding site. Asn-139 and Asn-172 together coordinate FMN. Residue Asn-172 coordinates substrate. The Nucleophile role is filled by Ser-175. Asn-177 is a binding site for substrate. Residues Lys-217 and Thr-245 each contribute to the FMN site. 246 to 247 (NT) is a binding site for substrate. FMN contacts are provided by residues Gly-268, Gly-297, and 318-319 (YT).

This sequence belongs to the dihydroorotate dehydrogenase family. Type 2 subfamily. Monomer. FMN is required as a cofactor.

Its subcellular location is the cell membrane. The enzyme catalyses (S)-dihydroorotate + a quinone = orotate + a quinol. It functions in the pathway pyrimidine metabolism; UMP biosynthesis via de novo pathway; orotate from (S)-dihydroorotate (quinone route): step 1/1. Its function is as follows. Catalyzes the conversion of dihydroorotate to orotate with quinone as electron acceptor. The chain is Dihydroorotate dehydrogenase (quinone) from Pseudoalteromonas translucida (strain TAC 125).